We begin with the raw amino-acid sequence, 431 residues long: Protein S-Myc (431 aa).

Tyr-36 carries the phosphotyrosine; by Tyr-kinases modification. A bHLH domain is found at 348 to 400 (ERRRNHNRMERQRRDIMRSSFLNLRDLVPELVHNEKAAKVVILKKATEYIHTL). Residues 400–421 (LQADESKLLVERKKLYERQQQL) form a leucine-zipper region.

Efficient DNA binding requires dimerization with another bHLH protein.

It is found in the nucleus. Functionally, has apoptosis-inducing activity. The chain is Protein S-Myc (Mycs) from Mus musculus (Mouse).